Consider the following 361-residue polypeptide: D-alanine--D-alanine ligase (361 aa).

The ATP-grasp domain maps to 140 to 345; it reads KHLFAQAGLD…YAELIEKLVA (206 aa). 173 to 228 contributes to the ATP binding site; sequence EGELGYPCFVKPANLGSSVGISKCRSREELDQAFELAFQYDRKIVVEEGVIGREIE. Residues D299, E312, and N314 each contribute to the Mg(2+) site.

It belongs to the D-alanine--D-alanine ligase family. Requires Mg(2+) as cofactor. It depends on Mn(2+) as a cofactor.

It localises to the cytoplasm. The enzyme catalyses 2 D-alanine + ATP = D-alanyl-D-alanine + ADP + phosphate + H(+). It participates in cell wall biogenesis; peptidoglycan biosynthesis. In terms of biological role, cell wall formation. This is D-alanine--D-alanine ligase from Bacillus licheniformis (strain ATCC 14580 / DSM 13 / JCM 2505 / CCUG 7422 / NBRC 12200 / NCIMB 9375 / NCTC 10341 / NRRL NRS-1264 / Gibson 46).